A 1021-amino-acid chain; its full sequence is MGKGAGRDKYEPTATSEHGTKKKKAKERDMDELKKEISMDDHKLSLDELHRKYGTDLSRGLTTARAAEILARDGPNTLTPPPTTPEWVKFCRQLFGGFSLLLWIGSLLCFLAYGITSVMEGEPNSDNLYLGVVLAAVVIITGCFSYYQEAKSSKIMESFKNMVPQQALVVRNGEKMSINAEGVVVGDLVEVKGGDRIPADLRIISAHGCKVDNSSLTGESEPQTRSPDFSNENPLETRNIAFFSTNCVEGTAVGIVISTGDRTVMGRIASLASGLEGGKTPIAMEIEHFIHLITGVAVFLGVSFFILSLILEYTWLEAVIFLIGIIVANVPEGLLATVTVCLTLTAKRMARKNCLVKNLEAVGTLGSTSTICSDKTGTLTQNRMTVAHMWFDNQIHEADTTENQSGASFDKSSATWLALSRIAGLCNRAVFQANQENVPILKRAVAGDASESALLKCIELCCGSVKEMRERYPKVVEIPFNSTNKYQLSIHKNANAGESRHLLVMKGAPERILDRCDSILIHGKVQPLDEEIKDAFQNAYLELGGLGERVLGFCHLALPDDQFPEGFQFDTDEVNFPVEKLCFVGLMSMIDPPRAAVPDAVGKCRSAGIKVIMVTGDHPITAKAIAKGVGIISDGNETVEDIAARLNIPVSQVNPRDAKACVVHGSDLKDMTSEQLDDILLHHTEIVFARTSPQQKLIIVEGCQRQGAIVAVTGDGVNDSPALKKADIGVAMGIAGSDVSKQAADMILLDDNFASIVTGVEEGRLIFDNLKKSIAYTLTSNIPEITPFLIFIIANIPLPLGTCTILCIDLGTDMVPAISLAYEQAESDIMKRQPRNPKTDKLVNERLISMAYGQIGMIQALGGFFTYFVIMAENGFLPSGLVGIRLQWDDRWINDVEDSYGQQWTFEQRKIVEFTCHTAFFVSIVVVQWADLIICKTRRNSVFQQGMKNKILIFGLFEETALAAFLSYCPGMDVALRMYPLKPTWWFCAFPYSLLIFLYDEIRKLIIRRNPGGWVERETYY.

Residues 1–5 (MGKGA) constitute a propeptide that is removed on maturation. Positions 1–11 (MGKGAGRDKYE) are enriched in basic and acidic residues. The interval 1 to 31 (MGKGAGRDKYEPTATSEHGTKKKKAKERDMD) is disordered. Over 6–85 (GRDKYEPTAT…NTLTPPPTTP (80 aa)) the chain is Cytoplasmic. Position 10 is a phosphotyrosine (Tyr10). Position 16 is a phosphoserine; by PKC (Ser16). Residues 80–82 (PPP) form a phosphoinositide-3 kinase binding region. Residues 86–106 (EWVKFCRQLFGGFSLLLWIGS) traverse the membrane as a helical segment. Topologically, residues 107–129 (LLCFLAYGITSVMEGEPNSDNLY) are extracellular. Residues 130–150 (LGVVLAAVVIITGCFSYYQEA) form a helical membrane-spanning segment. Residues 151-286 (KSSKIMESFK…GGKTPIAMEI (136 aa)) lie on the Cytoplasmic side of the membrane. The tract at residues 214–233 (SSLTGESEPQTRSPDFSNEN) is disordered. A helical membrane pass occupies residues 287 to 306 (EHFIHLITGVAVFLGVSFFI). Over 307–318 (LSLILEYTWLEA) the chain is Extracellular. Residues 319 to 336 (VIFLIGIIVANVPEGLLA) form a helical membrane-spanning segment. Residues 337 to 770 (TVTVCLTLTA…EEGRLIFDNL (434 aa)) lie on the Cytoplasmic side of the membrane. Residue Asp374 is the 4-aspartylphosphate intermediate of the active site. Lys485 provides a ligand contact to ATP. Asp715 and Asp719 together coordinate Mg(2+). A helical membrane pass occupies residues 771-790 (KKSIAYTLTSNIPEITPFLI). Residues 791–800 (FIIANIPLPL) are Extracellular-facing. Residues 801–821 (GTCTILCIDLGTDMVPAISLA) traverse the membrane as a helical segment. Residues 822-841 (YEQAESDIMKRQPRNPKTDK) lie on the Cytoplasmic side of the membrane. Residues 842-864 (LVNERLISMAYGQIGMIQALGGF) traverse the membrane as a helical segment. Over 865–916 (FTYFVIMAENGFLPSGLVGIRLQWDDRWINDVEDSYGQQWTFEQRKIVEFTC) the chain is Extracellular. A helical transmembrane segment spans residues 917-936 (HTAFFVSIVVVQWADLIICK). Residues 937-949 (TRRNSVFQQGMKN) are Cytoplasmic-facing. At Ser941 the chain carries Phosphoserine; by PKA. A helical transmembrane segment spans residues 950–968 (KILIFGLFEETALAAFLSY). The Extracellular portion of the chain corresponds to 969-983 (CPGMDVALRMYPLKP). A helical transmembrane segment spans residues 984-1004 (TWWFCAFPYSLLIFLYDEIRK). Residues 1005–1021 (LIIRRNPGGWVERETYY) are Cytoplasmic-facing.

It belongs to the cation transport ATPase (P-type) (TC 3.A.3) family. Type IIC subfamily. As to quaternary structure, the sodium/potassium-transporting ATPase is composed of a catalytic alpha subunit, an auxiliary non-catalytic beta subunit and an additional regulatory subunit. Phosphorylation on Tyr-10 modulates pumping activity.

Its subcellular location is the cell membrane. The protein resides in the sarcolemma. The enzyme catalyses K(+)(out) + Na(+)(in) + ATP + H2O = K(+)(in) + Na(+)(out) + ADP + phosphate + H(+). In terms of biological role, this is the catalytic component of the active enzyme, which catalyzes the hydrolysis of ATP coupled with the exchange of sodium and potassium ions across the plasma membrane. This action creates the electrochemical gradient of sodium and potassium ions, providing the energy for active transport of various nutrients. This chain is Sodium/potassium-transporting ATPase subunit alpha-1 (ATP1A1), found in Gallus gallus (Chicken).